A 137-amino-acid chain; its full sequence is Protein cornichon homolog 3 (137 aa).

3 helical membrane-spanning segments follow: residues Ile-8–Leu-28, Ile-54–Leu-74, and Leu-113–Asp-133.

It belongs to the cornichon family.

It is found in the membrane. The sequence is that of Protein cornichon homolog 3 from Arabidopsis thaliana (Mouse-ear cress).